The primary structure comprises 543 residues: Chaperonin GroEL (543 aa).

ATP is bound by residues 31-34 (TMGP), 88-92 (DGTTT), Gly415, 479-481 (DAL), and Asp495.

This sequence belongs to the chaperonin (HSP60) family. In terms of assembly, forms a cylinder of 14 subunits composed of two heptameric rings stacked back-to-back. Interacts with the co-chaperonin GroES.

The protein resides in the cytoplasm. The catalysed reaction is ATP + H2O + a folded polypeptide = ADP + phosphate + an unfolded polypeptide.. Together with its co-chaperonin GroES, plays an essential role in assisting protein folding. The GroEL-GroES system forms a nano-cage that allows encapsulation of the non-native substrate proteins and provides a physical environment optimized to promote and accelerate protein folding. This Clostridium tetani (strain Massachusetts / E88) protein is Chaperonin GroEL.